The following is a 149-amino-acid chain: 3-hydroxyacyl-[acyl-carrier-protein] dehydratase FabZ (149 aa).

Residue histidine 53 is part of the active site.

The protein belongs to the thioester dehydratase family. FabZ subfamily.

The protein localises to the cytoplasm. It carries out the reaction a (3R)-hydroxyacyl-[ACP] = a (2E)-enoyl-[ACP] + H2O. In terms of biological role, involved in unsaturated fatty acids biosynthesis. Catalyzes the dehydration of short chain beta-hydroxyacyl-ACPs and long chain saturated and unsaturated beta-hydroxyacyl-ACPs. This Neisseria meningitidis serogroup C / serotype 2a (strain ATCC 700532 / DSM 15464 / FAM18) protein is 3-hydroxyacyl-[acyl-carrier-protein] dehydratase FabZ.